The chain runs to 131 residues: D-ribose pyranase (131 aa).

The active-site Proton donor is histidine 20. Residues aspartate 28, histidine 98, and 120-122 (YAN) each bind substrate.

This sequence belongs to the RbsD / FucU family. RbsD subfamily. Homodecamer.

Its subcellular location is the cytoplasm. It carries out the reaction beta-D-ribopyranose = beta-D-ribofuranose. It functions in the pathway carbohydrate metabolism; D-ribose degradation; D-ribose 5-phosphate from beta-D-ribopyranose: step 1/2. Catalyzes the interconversion of beta-pyran and beta-furan forms of D-ribose. The protein is D-ribose pyranase of Bacillus cereus (strain ZK / E33L).